The primary structure comprises 321 residues: Phospho-N-acetylmuramoyl-pentapeptide-transferase (321 aa).

The next 10 membrane-spanning stretches (helical) occupy residues 1-21 (MIFV…PVLI), 50-70 (MGGL…IIFV), 76-96 (IILL…DDYI), 112-132 (FLAQ…FHLV), 140-160 (IPFT…IVFL), 176-196 (GLAT…SFVL), 200-220 (AIGI…PYNI), 225-245 (VFMG…ISIM), 250-270 (LSLI…MLQV), and 300-320 (VVTV…WIGV).

Belongs to the glycosyltransferase 4 family. MraY subfamily. The cofactor is Mg(2+).

The protein localises to the cell membrane. It carries out the reaction UDP-N-acetyl-alpha-D-muramoyl-L-alanyl-gamma-D-glutamyl-L-lysyl-D-alanyl-D-alanine + di-trans,octa-cis-undecaprenyl phosphate = Mur2Ac(oyl-L-Ala-gamma-D-Glu-L-Lys-D-Ala-D-Ala)-di-trans,octa-cis-undecaprenyl diphosphate + UMP. Its pathway is cell wall biogenesis; peptidoglycan biosynthesis. In terms of biological role, catalyzes the initial step of the lipid cycle reactions in the biosynthesis of the cell wall peptidoglycan: transfers peptidoglycan precursor phospho-MurNAc-pentapeptide from UDP-MurNAc-pentapeptide onto the lipid carrier undecaprenyl phosphate, yielding undecaprenyl-pyrophosphoryl-MurNAc-pentapeptide, known as lipid I. This chain is Phospho-N-acetylmuramoyl-pentapeptide-transferase, found in Staphylococcus aureus (strain bovine RF122 / ET3-1).